Consider the following 618-residue polypeptide: Nuclear cap-binding protein subunit 3 (618 aa).

The segment at 1-53 is disordered; that stretch reads MAAVRGLRVSVKAGGGAEPEPMEVEEGEVEAAAGRTSPVEATADQTSPREVVP. Residues 20–29 are compositionally biased toward acidic residues; sequence EPMEVEEGEV. The tract at residues 117 to 178 is RNA recognition motif (RRM) domain; that stretch reads ETLYICGVDE…LSSKPTNEKG (62 aa). The WLDD motif; essential for 7-methylguanosine-containing mRNA cap binding motif lies at 146-149; it reads WLDD. Disordered stretches follow at residues 170–250, 342–366, and 426–618; these read SSKP…DLRP, PEEPIEEEEEEEEEEEEDMDEDDRV, and QLKT…DTDS. Positions 174–188 are enriched in basic and acidic residues; that stretch reads TNEKGQRKKDGEHRS. Positions 205 to 223 are enriched in acidic residues; the sequence is DETEEGEVEEDNPNDAEVE. Over residues 231 to 240 the composition is skewed to polar residues; it reads PPETLSQAEQ. Residues 344 to 365 are compositionally biased toward acidic residues; that stretch reads EPIEEEEEEEEEEEEDMDEDDR. The span at 436–450 shows a compositional bias: polar residues; sequence SDSAGNSVKSRIGSK. Over residues 451–468 the composition is skewed to basic and acidic residues; it reads SHSEKPADVRLILEEKRQ. Residues 469–481 are compositionally biased toward low complexity; it reads STASRQQSSSSGK. Basic and acidic residues-rich tracts occupy residues 507–517, 550–562, and 583–596; these read SRREPLSDVHS, PKEKDRASEKSGE, and IKEKEQIRQKKSRL. The segment covering 609 to 618 has biased composition (low complexity); sequence ESSSGSDTDS.

The protein belongs to the NCBP3 family. In terms of assembly, component of an alternative cap-binding complex (CBC) composed of NCBP1/CBP80 and NCBP3.

The protein resides in the nucleus. Its subcellular location is the cytoplasm. In terms of biological role, associates with NCBP1/CBP80 to form an alternative cap-binding complex (CBC) which plays a key role in mRNA export. NCBP3 serves as adapter protein linking the capped RNAs (m7GpppG-capped RNA) to NCBP1/CBP80. Unlike the conventional CBC with NCBP2 which binds both small nuclear RNA (snRNA) and messenger (mRNA) and is involved in their export from the nucleus, the alternative CBC with NCBP3 does not bind snRNA and associates only with mRNA thereby playing a role in only mRNA export. The sequence is that of Nuclear cap-binding protein subunit 3 from Xenopus laevis (African clawed frog).